Consider the following 373-residue polypeptide: Probable jasmonic acid carboxyl methyltransferase 1 (373 aa).

Y18 contributes to the S-adenosyl-L-homocysteine binding site. Jasmonate is bound at residue Q25. 6 residues coordinate S-adenosyl-L-homocysteine: C59, N64, D96, L97, S135, and F136. Jasmonate is bound by residues H156 and W157. 4 residues coordinate Mg(2+): N174, D260, F262, and N263.

It belongs to the methyltransferase superfamily. Type-7 methyltransferase family. It depends on Mg(2+) as a cofactor.

It is found in the cytoplasm. The protein localises to the nucleus. The enzyme catalyses jasmonate + S-adenosyl-L-methionine = methyl (-)-jasmonate + S-adenosyl-L-homocysteine. The protein operates within lipid metabolism; oxylipin biosynthesis. Catalyzes the methylation of jasmonate into methyljasmonate, a plant volatile that acts as an important cellular regulator mediating diverse developmental processes and defense responses. The chain is Probable jasmonic acid carboxyl methyltransferase 1 from Theobroma cacao (Cacao).